Consider the following 360-residue polypeptide: D-alanine--D-alanine ligase (360 aa).

An ATP-grasp domain is found at K139–S344. An ATP-binding site is contributed by E172–E227. D298, E311, and N313 together coordinate Mg(2+).

This sequence belongs to the D-alanine--D-alanine ligase family. Requires Mg(2+) as cofactor. Mn(2+) serves as cofactor.

It localises to the cytoplasm. It carries out the reaction 2 D-alanine + ATP = D-alanyl-D-alanine + ADP + phosphate + H(+). Its pathway is cell wall biogenesis; peptidoglycan biosynthesis. Cell wall formation. The sequence is that of D-alanine--D-alanine ligase from Bacillus pumilus (strain SAFR-032).